Consider the following 252-residue polypeptide: tRNA (guanine-N(1)-)-methyltransferase (252 aa).

Residues Gly-113 and Ile-133–Leu-138 each bind S-adenosyl-L-methionine. Low complexity predominate over residues Val-229–Ala-238. Residues Val-229–Gly-252 are disordered. Residues Glu-241 to Gly-252 show a composition bias toward basic and acidic residues.

It belongs to the RNA methyltransferase TrmD family. In terms of assembly, homodimer.

It localises to the cytoplasm. The catalysed reaction is guanosine(37) in tRNA + S-adenosyl-L-methionine = N(1)-methylguanosine(37) in tRNA + S-adenosyl-L-homocysteine + H(+). In terms of biological role, specifically methylates guanosine-37 in various tRNAs. The chain is tRNA (guanine-N(1)-)-methyltransferase from Rhodopseudomonas palustris (strain HaA2).